The primary structure comprises 466 residues: Chromosomal replication initiator protein DnaA (466 aa).

The tract at residues 1–86 (MSLSLWQQCL…EVGTKPVTQT (86 aa)) is domain I, interacts with DnaA modulators. Positions 86 to 129 (TLKTPVHNVVAPTQTTTAQPQRVAPAARSGWDNVPAPAEPTYRS) are domain II. Residues 130–346 (NVNVKHTFDN…GALNRVIANA (217 aa)) form a domain III, AAA+ region region. ATP contacts are provided by Gly174, Gly176, Lys177, and Thr178. The tract at residues 347 to 466 (NFTGRAITID…FSNLIRTLSS (120 aa)) is domain IV, binds dsDNA.

Belongs to the DnaA family. Oligomerizes as a right-handed, spiral filament on DNA at oriC.

It localises to the cytoplasm. Plays an essential role in the initiation and regulation of chromosomal replication. ATP-DnaA binds to the origin of replication (oriC) to initiate formation of the DNA replication initiation complex once per cell cycle. Binds the DnaA box (a 9 base pair repeat at the origin) and separates the double-stranded (ds)DNA. Forms a right-handed helical filament on oriC DNA; dsDNA binds to the exterior of the filament while single-stranded (ss)DNA is stabiized in the filament's interior. The ATP-DnaA-oriC complex binds and stabilizes one strand of the AT-rich DNA unwinding element (DUE), permitting loading of DNA polymerase. After initiation quickly degrades to an ADP-DnaA complex that is not apt for DNA replication. Binds acidic phospholipids. In Salmonella dublin (strain CT_02021853), this protein is Chromosomal replication initiator protein DnaA.